A 139-amino-acid polypeptide reads, in one-letter code: Class I hydrophobin A (139 aa).

The signal sequence occupies residues 1–18; sequence MKFSIAAAVLALASAVVA. 4 disulfides stabilise this stretch: Cys-45–Cys-113, Cys-53–Cys-107, Cys-54–Cys-88, and Cys-114–Cys-133.

The protein belongs to the fungal hydrophobin family. As to quaternary structure, self-assembles to form functional amyloid fibrils called rodlets. Self-assembly into fibrillar rodlets occurs spontaneously at hydrophobic:hydrophilic interfaces and the rodlets further associate laterally to form amphipathic monolayers.

The protein resides in the secreted. It is found in the cell wall. Aerial growth, conidiation, and dispersal of filamentous fungi in the environment rely upon a capability of their secreting small amphipathic proteins called hydrophobins (HPBs) with low sequence identity. Class I can self-assemble into an outermost layer of rodlet bundles on aerial cell surfaces, conferring cellular hydrophobicity that supports fungal growth, development and dispersal; whereas Class II form highly ordered films at water-air interfaces through intermolecular interactions but contribute nothing to the rodlet structure. HYPA is a class I hydrophobin that contributes to surface hydrophobicity, and prevents recognition by the cellular immune defense system. This Arthroderma benhamiae (strain ATCC MYA-4681 / CBS 112371) (Trichophyton mentagrophytes) protein is Class I hydrophobin A.